The sequence spans 549 residues: ATP synthase subunit alpha (549 aa).

Position 172 to 179 (172 to 179 (GDRKTGKT)) interacts with ATP. Residues 513–549 (SSTGESVVPDEHVEAMDEEDLGKESVKVKKPAPQKKK) are disordered. A compositionally biased stretch (basic residues) spans 540 to 549 (VKKPAPQKKK).

This sequence belongs to the ATPase alpha/beta chains family. As to quaternary structure, F-type ATPases have 2 components, CF(1) - the catalytic core - and CF(0) - the membrane proton channel. CF(1) has five subunits: alpha(3), beta(3), gamma(1), delta(1), epsilon(1). CF(0) has three main subunits: a(1), b(2) and c(9-12). The alpha and beta chains form an alternating ring which encloses part of the gamma chain. CF(1) is attached to CF(0) by a central stalk formed by the gamma and epsilon chains, while a peripheral stalk is formed by the delta and b chains.

It localises to the cell membrane. It carries out the reaction ATP + H2O + 4 H(+)(in) = ADP + phosphate + 5 H(+)(out). Its function is as follows. Produces ATP from ADP in the presence of a proton gradient across the membrane. The alpha chain is a regulatory subunit. In Mycobacterium ulcerans (strain Agy99), this protein is ATP synthase subunit alpha.